The chain runs to 336 residues: Acetyl-coenzyme A carboxylase carboxyl transferase subunit beta (336 aa).

The CoA carboxyltransferase N-terminal domain maps to 27–297 (LWTKCESCQG…VAPAPAPAAT (271 aa)). Cys-31, Cys-34, Cys-50, and Cys-53 together coordinate Zn(2+). The C4-type zinc-finger motif lies at 31-53 (CESCQGILYRPDLERNLEVCPKC). A disordered region spans residues 287 to 336 (SVAPAPAPAATVDPEPESAEPEAPAEEAGPAGAAGDQAGESQDEGDPRNA). A compositionally biased stretch (acidic residues) spans 300 to 311 (PEPESAEPEAPA). Over residues 312–326 (EEAGPAGAAGDQAGE) the composition is skewed to low complexity.

Belongs to the AccD/PCCB family. Acetyl-CoA carboxylase is a heterohexamer composed of biotin carboxyl carrier protein (AccB), biotin carboxylase (AccC) and two subunits each of ACCase subunit alpha (AccA) and ACCase subunit beta (AccD). It depends on Zn(2+) as a cofactor.

It localises to the cytoplasm. The catalysed reaction is N(6)-carboxybiotinyl-L-lysyl-[protein] + acetyl-CoA = N(6)-biotinyl-L-lysyl-[protein] + malonyl-CoA. It participates in lipid metabolism; malonyl-CoA biosynthesis; malonyl-CoA from acetyl-CoA: step 1/1. Component of the acetyl coenzyme A carboxylase (ACC) complex. Biotin carboxylase (BC) catalyzes the carboxylation of biotin on its carrier protein (BCCP) and then the CO(2) group is transferred by the transcarboxylase to acetyl-CoA to form malonyl-CoA. The sequence is that of Acetyl-coenzyme A carboxylase carboxyl transferase subunit beta from Halorhodospira halophila (strain DSM 244 / SL1) (Ectothiorhodospira halophila (strain DSM 244 / SL1)).